The following is a 161-amino-acid chain: Allophycocyanin beta chain (161 aa).

Residue Asn-71 is modified to N4-methylasparagine. Cys-81 serves as a coordination point for (2R,3E)-phycocyanobilin.

Belongs to the phycobiliprotein family. As to quaternary structure, heterodimer of an alpha and a beta chain. Post-translationally, contains one covalently linked phycocyanobilin chromophore.

Its subcellular location is the plastid. The protein resides in the cyanelle thylakoid membrane. In terms of biological role, light-harvesting photosynthetic bile pigment-protein from the phycobiliprotein complex. Allophycocyanin has a maximum absorption at approximately 650 nanometers. In Cyanophora paradoxa, this protein is Allophycocyanin beta chain (apcB).